A 159-amino-acid chain; its full sequence is Oleosin Cor a 12 (159 aa).

The span at 1 to 10 shows a compositional bias: polar residues; it reads MADRPQQLQV. The disordered stretch occupies residues 1-24; that stretch reads MADRPQQLQVHPQRGHGHYEGGIK. Helical transmembrane passes span 45-65, 70-90, and 92-112; these read VGGT…IGLL, LFII…LAVA, and FLSS…VLNY.

Belongs to the oleosin family. As to expression, expressed in seeds.

The protein localises to the lipid droplet. The protein resides in the membrane. Functionally, may have a structural role to stabilize the lipid body during desiccation of the seed by preventing coalescence of the oil. Probably interacts with both lipid and phospholipid moieties of lipid bodies. May also provide recognition signals for specific lipase anchorage in lipolysis during seedling growth. This is Oleosin Cor a 12 from Corylus avellana (European hazel).